Here is a 123-residue protein sequence, read N- to C-terminus: Large ribosomal subunit protein uL24 (123 aa).

This sequence belongs to the universal ribosomal protein uL24 family. Part of the 50S ribosomal subunit.

In terms of biological role, one of two assembly initiator proteins, it binds directly to the 5'-end of the 23S rRNA, where it nucleates assembly of the 50S subunit. Its function is as follows. One of the proteins that surrounds the polypeptide exit tunnel on the outside of the subunit. The chain is Large ribosomal subunit protein uL24 from Kineococcus radiotolerans (strain ATCC BAA-149 / DSM 14245 / SRS30216).